Reading from the N-terminus, the 316-residue chain is Remorin 4.1 (316 aa).

Disordered stretches follow at residues 1–108, 125–202, and 267–287; these read MLSE…PSEL, NANA…SVGQ, and AQNE…SAEA. Acidic residues predominate over residues 40-53; the sequence is EREEEVVVEEELEE. The span at 92 to 104 shows a compositional bias: polar residues; it reads RHTSIRSVGSDTA. Residues 125-135 are compositionally biased toward low complexity; that stretch reads NANAAAAAAAN. Basic and acidic residues-rich tracts occupy residues 143–153 and 277–287; these read GVDDALGRIGE and KAEEKRASAEA. Residues 242–288 are a coiled coil; it reads VEKANAWLKKYERKLEEKRAKAMEKAQNEVAKARRKAEEKRASAEAK.

It belongs to the remorin family. Interacts with BAK1. In terms of processing, phosphorylated by BRI1. Phosphorylation reduces the binding affinity to BAK1. In terms of tissue distribution, expressed in roots, leaf blades and leaf sheaths. Expressed at low levels in stems and spikelets.

The protein resides in the cell membrane. Functionally, functions in abscisic acid (ABA) signaling downstream of BZIP23. Acts as antagonistic and negative regulator of brassinosteroid (BR) signaling. Binds to BAK1 and inhibits its interaction with the BR receptor BRI1. Inhibits the formation and subsequent activation of the BRI1-BAK1 receptor complex. This Oryza sativa subsp. japonica (Rice) protein is Remorin 4.1.